The following is a 285-amino-acid chain: Putative ABC transporter ATP-binding protein CPE0195 (285 aa).

An ABC transporter domain is found at 6–242 (LKVEELNYNY…KEVIRKVNLR (237 aa)). 39 to 46 (GGNGVGKS) is a binding site for ATP.

It belongs to the ABC transporter superfamily.

It is found in the cell membrane. In terms of biological role, probably part of an ABC transporter complex. Responsible for energy coupling to the transport system. The chain is Putative ABC transporter ATP-binding protein CPE0195 from Clostridium perfringens (strain 13 / Type A).